The sequence spans 128 residues: uncharacterized protein (128 aa).

The next 3 helical transmembrane spans lie at 13–35 (FQMASFITSGLLVIIGLYGVFFV), 42–64 (IIALEILGSGVNLALIAIGYNGG), and 90–112 (LVLTNIVIEASMLAVMLGVSIIL).

It localises to the cell membrane. This is an uncharacterized protein from Methanocaldococcus jannaschii (strain ATCC 43067 / DSM 2661 / JAL-1 / JCM 10045 / NBRC 100440) (Methanococcus jannaschii).